We begin with the raw amino-acid sequence, 66 residues long: Large ribosomal subunit protein bL35 (66 aa).

This sequence belongs to the bacterial ribosomal protein bL35 family.

The chain is Large ribosomal subunit protein bL35 from Bradyrhizobium diazoefficiens (strain JCM 10833 / BCRC 13528 / IAM 13628 / NBRC 14792 / USDA 110).